The chain runs to 739 residues: MSSISLIQPDRDLFSWPQYWAACFGPAPFLPMSREEMDQLGWDSCDIILVTGDAYVDHPSFGMAICGRMLEAQGFRVGIIAQPDWSSKDDFMRLGKPNLFFGVTAGNMDSMINRYTADRRLRHDDAYTPDNVAGKRPDRATLVYTQRCKEAWKDVPVILGGIEASLRRTAHYDYWSDTVRRSVLVDSKADMLMFGNGERPLVEVAHRLAMGEPISEIRDVRNTAIIVKEALPGWSGVDSTRLDTPGKIDPIPHPYGEDLPCADNKPVAPKKQEAKAVTVQPPRPKPWEKTYVLLPSFEKVKGDKVLYAHASRILHHETNPGCARALMQKHGDRYVWINPPAIPLSTEEMDSVFALPYKRVPHPAYGNARIPAYEMIRFSVNIMRGCFGGCSFCSITEHEGRIIQSRSEDSIINEIEAIRDTVPGFTGVISDLGGPTANMYMLRCKSPRAEQTCRRLSCVYPDICPHMDTNHEPTINLYRRARDLKGIKKILIASGVRYDIAVEDPRYIKELATHHVGGYLKIAPEHTEEGPLSKMMKPGMGSYDRFKELFDTYSKQAGKEQYLIPYFISAHPGTRDEDMVNLALWLKKHRFRLDQVQNFYPSPLANSTTMYYTGKNPLAKIGYKSEDVFVPKGDKQRRLHKALLRYHDPANWPLIRQALEAMGKKHLIGSRRDCLVPAPTIEEMREARRQNRNTRPALTKHTPMATQRQTPATAKKASSTQSRPVNAGAKKRPKAAVGR.

The 279-residue stretch at 372 to 650 (AYEMIRFSVN…KALLRYHDPA (279 aa)) folds into the Radical SAM core domain. Residues C386, C390, and C393 each contribute to the [4Fe-4S] cluster site. The tract at residues 685 to 739 (REARRQNRNTRPALTKHTPMATQRQTPATAKKASSTQSRPVNAGAKKRPKAAVGR) is disordered. Polar residues predominate over residues 704-724 (MATQRQTPATAKKASSTQSRP). Residues 729–739 (AKKRPKAAVGR) are compositionally biased toward basic residues.

This sequence belongs to the UPF0313 family. The cofactor is [4Fe-4S] cluster.

The sequence is that of UPF0313 protein YgiQ (ygiQ) from Escherichia coli (strain K12).